The sequence spans 584 residues: Pectinesterase 3 (584 aa).

The first 50 residues, 1 to 50, serve as a signal peptide directing secretion; sequence MTRIKEFFTKLSESSTNQNISNIPKKKKKLFLALFATLLVVAAVIGIVAG. Residues 51–266 constitute a propeptide that is removed on maturation; sequence VNSRKNSGDN…LSTGDRRLLQ (216 aa). Residues Asn108, Asn129, and Asn226 are each glycosylated (N-linked (GlcNAc...) asparagine). Thr348 and Gln378 together coordinate substrate. Residue Asp401 is the Proton donor of the active site. Cys415 and Cys435 form a disulfide bridge. Catalysis depends on Asp422, which acts as the Nucleophile. Substrate is bound by residues Arg490 and Trp492.

This sequence in the N-terminal section; belongs to the PMEI family. It in the C-terminal section; belongs to the pectinesterase family. As to expression, in the peel, expression is localized to the region of the flavedo close to the oil glands, and to the innermost layer of the albedo. In the lamella, expression is localized to the cell layers opposing the fruit tissue, and to the parenchyma surrounding the vascular tissue. In the fruit vesicles, expression is restricted to the peripheral cell layers and stalk cells. High levels of expression are detected in the core matrix.

It is found in the secreted. The protein resides in the cell wall. The catalysed reaction is [(1-&gt;4)-alpha-D-galacturonosyl methyl ester](n) + n H2O = [(1-&gt;4)-alpha-D-galacturonosyl](n) + n methanol + n H(+). It functions in the pathway glycan metabolism; pectin degradation; 2-dehydro-3-deoxy-D-gluconate from pectin: step 1/5. Functionally, acts in the modification of cell walls via demethylesterification of cell wall pectin. This Citrus sinensis (Sweet orange) protein is Pectinesterase 3.